Consider the following 118-residue polypeptide: MATATSQSAPTQRIKMRLRKGDTVQVIAGKDKGKTGEVLRTLPNENRVIVEGVNMRTRHVKPTQEGESGRIVTEEASLHASNVMLYSTAKKVASRVELITEKDGSKKRRLKKTGEVID.

The protein belongs to the universal ribosomal protein uL24 family. In terms of assembly, part of the 50S ribosomal subunit.

Its function is as follows. One of two assembly initiator proteins, it binds directly to the 5'-end of the 23S rRNA, where it nucleates assembly of the 50S subunit. Functionally, one of the proteins that surrounds the polypeptide exit tunnel on the outside of the subunit. In Synechococcus sp. (strain WH7803), this protein is Large ribosomal subunit protein uL24.